Reading from the N-terminus, the 321-residue chain is Tetraacyldisaccharide 4'-kinase (321 aa).

An ATP-binding site is contributed by S54–T61.

Belongs to the LpxK family.

It carries out the reaction a lipid A disaccharide + ATP = a lipid IVA + ADP + H(+). It participates in glycolipid biosynthesis; lipid IV(A) biosynthesis; lipid IV(A) from (3R)-3-hydroxytetradecanoyl-[acyl-carrier-protein] and UDP-N-acetyl-alpha-D-glucosamine: step 6/6. Its function is as follows. Transfers the gamma-phosphate of ATP to the 4'-position of a tetraacyldisaccharide 1-phosphate intermediate (termed DS-1-P) to form tetraacyldisaccharide 1,4'-bis-phosphate (lipid IVA). The sequence is that of Tetraacyldisaccharide 4'-kinase from Rickettsia africae (strain ESF-5).